Here is a 407-residue protein sequence, read N- to C-terminus: Phosphoglycerate kinase (407 aa).

Substrate is bound by residues 21-23 (DLN), Arg-36, 59-62 (HQGR), Arg-116, and Arg-156. Residues Glu-332 and 358–361 (GGDT) each bind ATP.

The protein belongs to the phosphoglycerate kinase family. As to quaternary structure, monomer.

The protein resides in the cytoplasm. The catalysed reaction is (2R)-3-phosphoglycerate + ATP = (2R)-3-phospho-glyceroyl phosphate + ADP. The protein operates within carbohydrate degradation; glycolysis; pyruvate from D-glyceraldehyde 3-phosphate: step 2/5. In Halorubrum lacusprofundi (strain ATCC 49239 / DSM 5036 / JCM 8891 / ACAM 34), this protein is Phosphoglycerate kinase.